The primary structure comprises 655 residues: p-hydroxybenzoic acid efflux pump subunit AaeB (655 aa).

11 consecutive transmembrane segments (helical) span residues 13–33, 38–58, 69–89, 93–113, 121–141, 152–172, 370–390, 407–427, 431–451, 459–479, and 482–502; these read FAVK…HFQL, WAVL…GGEP, LRII…ISMI, LLMI…SSLV, WGLS…EPLL, EIVI…PRSI, LFWL…IAVV, FIYG…VIIP, QSML…GIEV, MGAL…TFHF, and FLDS…VILL.

This sequence belongs to the aromatic acid exporter ArAE (TC 2.A.85) family.

The protein localises to the cell inner membrane. Its function is as follows. Forms an efflux pump with AaeA. Could function as a metabolic relief valve, allowing to eliminate certain compounds when they accumulate to high levels in the cell. The sequence is that of p-hydroxybenzoic acid efflux pump subunit AaeB from Salmonella dublin (strain CT_02021853).